Here is an 81-residue protein sequence, read N- to C-terminus: Putative defensin-like protein 25 (81 aa).

An N-terminal signal peptide occupies residues 1 to 23 (MASLKVFSFALILVLTFSVDVEG). 4 disulfide bridges follow: cysteine 33-cysteine 81, cysteine 43-cysteine 68, cysteine 52-cysteine 77, and cysteine 56-cysteine 79.

The protein belongs to the DEFL family.

It localises to the secreted. In Arabidopsis thaliana (Mouse-ear cress), this protein is Putative defensin-like protein 25.